Consider the following 211-residue polypeptide: 3-demethoxyubiquinol 3-hydroxylase (211 aa).

Residues Glu60, Glu90, His93, Glu142, Glu174, and His177 each contribute to the Fe cation site.

This sequence belongs to the COQ7 family. Fe cation is required as a cofactor.

It localises to the cell membrane. It catalyses the reaction a 5-methoxy-2-methyl-3-(all-trans-polyprenyl)benzene-1,4-diol + AH2 + O2 = a 3-demethylubiquinol + A + H2O. It participates in cofactor biosynthesis; ubiquinone biosynthesis. Functionally, catalyzes the hydroxylation of 2-nonaprenyl-3-methyl-6-methoxy-1,4-benzoquinol during ubiquinone biosynthesis. The chain is 3-demethoxyubiquinol 3-hydroxylase from Acinetobacter baumannii (strain AB307-0294).